An 87-amino-acid chain; its full sequence is UPF0250 protein Spro_1197 (87 aa).

It belongs to the UPF0250 family.

This Serratia proteamaculans (strain 568) protein is UPF0250 protein Spro_1197.